The primary structure comprises 337 residues: DnaJ homolog dnj-2 (337 aa).

A helical transmembrane segment spans residues 4 to 24 (AIAAPILFLLVSFFVQECESV). Residues 36 to 105 (NCYDVLEVNR…EAKTNYDYYL (70 aa)) form the J domain. A run of 2 helical transmembrane segments spans residues 127-147 (VDLR…QFLS) and 222-242 (LAWH…WTAL). A coiled-coil region spans residues 293–323 (LKRNCATWKAERDAAEQEKMAQSGRYKRYKR).

The protein belongs to the DNAJC25 family.

Its subcellular location is the membrane. The sequence is that of DnaJ homolog dnj-2 (dnj-2) from Caenorhabditis elegans.